A 462-amino-acid chain; its full sequence is Cysteine--tRNA ligase (462 aa).

C29 contacts Zn(2+). The 'HIGH' region signature appears at 31-41 (MTVYDLCHLGH). Zn(2+) contacts are provided by C217, H242, and E246. The 'KMSKS' region motif lies at 274–278 (KMSKS). K277 lines the ATP pocket.

Belongs to the class-I aminoacyl-tRNA synthetase family. In terms of assembly, monomer. It depends on Zn(2+) as a cofactor.

The protein localises to the cytoplasm. It catalyses the reaction tRNA(Cys) + L-cysteine + ATP = L-cysteinyl-tRNA(Cys) + AMP + diphosphate. The chain is Cysteine--tRNA ligase from Polaromonas sp. (strain JS666 / ATCC BAA-500).